A 445-amino-acid polypeptide reads, in one-letter code: 8-amino-7-oxononanoate synthase (445 aa).

Arg-40 contributes to the substrate binding site. Residue 131–132 participates in pyridoxal 5'-phosphate binding; sequence GY. His-156 lines the substrate pocket. Pyridoxal 5'-phosphate contacts are provided by Ser-202, His-230, and Thr-258. An N6-(pyridoxal phosphate)lysine modification is found at Lys-261. Thr-377 is a binding site for substrate. The segment at 408–445 is disordered; sequence ASEGQTRRDAEQPPRSLRSLPPEGAAASLGAARRETAA.

The protein belongs to the class-II pyridoxal-phosphate-dependent aminotransferase family. BioF subfamily. In terms of assembly, homodimer. Requires pyridoxal 5'-phosphate as cofactor.

It catalyses the reaction 6-carboxyhexanoyl-[ACP] + L-alanine + H(+) = (8S)-8-amino-7-oxononanoate + holo-[ACP] + CO2. It functions in the pathway cofactor biosynthesis; biotin biosynthesis. In terms of biological role, catalyzes the decarboxylative condensation of pimeloyl-[acyl-carrier protein] and L-alanine to produce 8-amino-7-oxononanoate (AON), [acyl-carrier protein], and carbon dioxide. The protein is 8-amino-7-oxononanoate synthase of Burkholderia ambifaria (strain MC40-6).